The primary structure comprises 706 residues: Termination factor NPH-I homolog (706 aa).

The region spanning 62 to 227 is the Helicase ATP-binding domain; that stretch reads IGQGENTRGL…VPCFNMLSGR (166 aa). 75-82 contributes to the ATP binding site; sequence HQMGMGKT. A DEAH box motif is present at residues 168-171; it reads DEAH. In terms of domain architecture, Helicase C-terminal spans 378–599; it reads KIVCMLKNIK…HLNSAFRDLL (222 aa).

It belongs to the DEAD box helicase family. DEAH subfamily. In terms of assembly, part of the viral DNA-directed RNA polymerase that consists of 8 polII-like subunits (RPB1, RPB2, RPB3, RPB5, RPB6, RPB7, RPB9, RPB10), a capping enzyme and a termination factor.

It localises to the virion. In terms of biological role, putative DNA-dependent ATPase required for providing the needed energy to achieve the termination of early transcripts. The protein is Termination factor NPH-I homolog of African swine fever virus (isolate Pig/Kenya/KEN-50/1950) (ASFV).